The chain runs to 1318 residues: 1-phosphatidylinositol 4,5-bisphosphate phosphodiesterase classes I and II (1318 aa).

A PI-PLC X-box domain is found at 318–466; that stretch reads DDMDQPMSHY…LRRKIIIKNK (149 aa). Catalysis depends on residues His333 and His378. Residues Lys464 and Lys466 each coordinate substrate. A compositionally biased stretch (basic residues) spans 466-481; it reads KKKHHHHHHHHHHKKP. Disordered stretches follow at residues 466–489 and 505–594; these read KKKH…TPAA and QQVG…KETE. Composition is skewed to low complexity over residues 528–543 and 554–563; these read ATGT…AGHA and KDSTGSSDSD. Positions 571-580 are enriched in polar residues; the sequence is LPNTTPNLPS. The segment covering 585–594 has biased composition (basic and acidic residues); that stretch reads PPEKAQKETE. A PI-PLC Y-box domain is found at 599–715; sequence ISALVNYVQP…GYLLKPEFMR (117 aa). Residues Ser628 and Arg655 each coordinate substrate. One can recognise a C2 domain in the interval 715 to 843; that stretch reads RRSDRRLDPF…NLRSEVGQPI (129 aa). 2 disordered regions span residues 1080 to 1112 and 1296 to 1318; these read LDLG…TQES and GSHS…EMKT. The span at 1088–1107 shows a compositional bias: low complexity; sequence ESAAADAGEDLAGGSSSLDG.

In terms of tissue distribution, expressed in neuronal cell bodies of the optic lobe, central brain, and thoracic ganglia in adults, and the brain of larvae.

It catalyses the reaction a 1,2-diacyl-sn-glycero-3-phospho-(1D-myo-inositol-4,5-bisphosphate) + H2O = 1D-myo-inositol 1,4,5-trisphosphate + a 1,2-diacyl-sn-glycerol + H(+). In terms of biological role, the production of the second messenger molecules diacylglycerol (DAG) and inositol 1,4,5-trisphosphate (IP3) is mediated by activated phosphatidylinositol-specific phospholipase C enzymes. The chain is 1-phosphatidylinositol 4,5-bisphosphate phosphodiesterase classes I and II (Plc21C) from Drosophila melanogaster (Fruit fly).